A 59-amino-acid chain; its full sequence is Aedesin (59 aa).

The N-terminal stretch at M1 to A23 is a signal peptide.

Belongs to the cecropin family. In terms of tissue distribution, salivary gland (at protein level).

It is found in the secreted. Antimicrobial peptide. Exhibits antibacterial activity against Gram-negative bacteria, such as Escherichia coli, Pseudomonas aeruginosa, Acinetobacter baumannii and Klebsiella pneumoniae. Shows no antibacterial effects against Gram-positive bacteria, such as Staphylococcus aureus, Enterococcus faecalis and Enterococcus faecium. Exhibits antiviral activity against all four dengue virus serotypes and chikungunya virus. Exhibits leishmanicidal activity. Partially neutralizes lipopolysaccharides (LPS). Exhibits anti-inflammatory properties: inhibits LPS-induced iNOS/NOS2 transcription, nitric oxide (NO) and pro-inflammatory cytokine production in mouse macrophages and human peripheral blood mononuclear cells (PBMCs); inhibits LPS-induced activation of MAPK and NF-kappa-B signaling pathways in mouse macrophages. The sequence is that of Aedesin from Aedes aegypti (Yellowfever mosquito).